The chain runs to 305 residues: Glycine--tRNA ligase alpha subunit (305 aa).

It belongs to the class-II aminoacyl-tRNA synthetase family. As to quaternary structure, tetramer of two alpha and two beta subunits.

It localises to the cytoplasm. The catalysed reaction is tRNA(Gly) + glycine + ATP = glycyl-tRNA(Gly) + AMP + diphosphate. This chain is Glycine--tRNA ligase alpha subunit, found in Streptococcus pneumoniae (strain ATCC BAA-255 / R6).